The chain runs to 3011 residues: Genome polyprotein (3011 aa).

N-acetylserine; by host is present on serine 2. Residues 2-23 (STIPKPQRKTKRNTNRRPQDVK) are interaction with STAT1. The interval 2–58 (STIPKPQRKTKRNTNRRPQDVKFPGGGQIVGGVYLLPRRGPRLGVRATRKTSERSQP) is interaction with EIF2AK2/PKR. The tract at residues 2–59 (STIPKPQRKTKRNTNRRPQDVKFPGGGQIVGGVYLLPRRGPRLGVRATRKTSERSQPR) is interaction with DDX3X. The tract at residues 2-75 (STIPKPQRKT…PKVRRPEGRT (74 aa)) is disordered. At 2–168 (STIPKPQRKT…EDGVNYATGN (167 aa)) the chain is on the cytoplasmic side. 2 consecutive short sequence motifs (nuclear localization signal) follow at residues 5 to 13 (PKPQRKTKR) and 38 to 43 (PRRGPR). Positions 7–16 (PQRKTKRNTN) are enriched in basic residues. A compositionally biased stretch (low complexity) spans 32 to 47 (GGVYLLPRRGPRLGVR). A Phosphoserine; by host modification is found at serine 53. 2 consecutive short sequence motifs (nuclear localization signal) follow at residues 58-64 (PRGRRQP) and 66-71 (PKVRRP). Over residues 58-68 (PRGRRQPIPKV) the composition is skewed to basic residues. Serine 99 bears the Phosphoserine; by host mark. The segment at 112-152 (PRRRSRNLGKVIDTLTCGFADLMGYIPLVGAPLGGAARALA) is important for endoplasmic reticulum and mitochondrial localization. At serine 116 the chain carries Phosphoserine; by host PKA. The interaction with APOA2 stretch occupies residues 122–173 (VIDTLTCGFADLMGYIPLVGAPLGGAARALAHGVRVLEDGVNYATGNLPGCS). The tract at residues 164-167 (YATG) is important for lipid droplets localization. Residues 169 to 189 (LPGCSFSIFLLALLSCLTVPA) form a helical membrane-spanning segment. Residues 178 to 191 (LLALLSCLTVPASA) constitute a propeptide, ER anchor for the core protein, removed in mature form by host signal peptidase. Topologically, residues 190-358 (SAYQVRNSTG…AGAHWGVLAG (169 aa)) are lumenal. N-linked (GlcNAc...) asparagine; by host glycosylation is found at asparagine 196, asparagine 209, and asparagine 234. The interval 265 to 296 (LVGSATLCSALYVGDLCGSVFLIGQLFTFSPR) is important for fusion. The N-linked (GlcNAc...) asparagine; by host glycan is linked to asparagine 305. Residues 359–379 (IAYFSMVGNWAKVLVVLLLFA) form a helical membrane-spanning segment. Residues 380–725 (GVDAETIVSG…WEYVVLLFLL (346 aa)) are Lumenal-facing. Residues 385-411 (TIVSGGQAARAMSGLVSLFTPGAKQNI) form an HVR1 region. 4 N-linked (GlcNAc...) (high mannose) asparagine; by host glycosylation sites follow: asparagine 417, asparagine 423, asparagine 430, and asparagine 448. Cystine bridges form between cysteine 429-cysteine 552, cysteine 452-cysteine 459, cysteine 486-cysteine 494, and cysteine 503-cysteine 508. Residues 474-479 (HANGSG) are HVR2. A CD81-binding 1 region spans residues 480–493 (PDQRPYCWHYPPKP). A glycan (N-linked (GlcNAc...) (high mannose) asparagine; by host) is linked at asparagine 532. Asparagine 540 carries an N-linked (GlcNAc...) asparagine; by host glycan. Positions 544 to 551 (PPLGNWFG) are CD81-binding 2. The N-linked (GlcNAc...) (high mannose) asparagine; by host glycan is linked to asparagine 556. Cysteine 564 and cysteine 569 form a disulfide bridge. A glycan (N-linked (GlcNAc...) (high mannose) asparagine; by host) is linked at asparagine 576. 3 cysteine pairs are disulfide-bonded: cysteine 581–cysteine 585, cysteine 597–cysteine 620, and cysteine 607–cysteine 644. Residues asparagine 623 and asparagine 645 are each glycosylated (N-linked (GlcNAc...) (high mannose) asparagine; by host). Cysteines 652 and 677 form a disulfide. The interval 660-671 (SELSPLLLSTTQ) is PKR/eIF2-alpha phosphorylation homology domain (PePHD). Residues 726 to 746 (LADARVCSCLWMMLLISQAEA) form a helical membrane-spanning segment. Residues 747–757 (ALENLVILNAA) are Lumenal-facing. Residues 758 to 778 (SLAGTRGLVSFLVFFCFAWYL) traverse the membrane as a helical segment. Residues 779–781 (KGR) lie on the Cytoplasmic side of the membrane. A helical membrane pass occupies residues 782–803 (WVPGAAYALYGMWPLLLLLLAL). Topologically, residues 804 to 813 (PQRAYALDTE) are lumenal. A helical membrane pass occupies residues 814–834 (VAASCGGVVLVGLMALTLSPY). Over 835 to 838 (YKRC) the chain is Cytoplasmic. A helical transmembrane segment spans residues 839 to 859 (ISWCLWWLQYFLTRVEAQLHV). At 860–881 (WVPPLNVRGGRDAVILLMCVVH) the chain is on the lumenal side. A helical transmembrane segment spans residues 882-902 (PTLVFDITKLLLAVLGPLWIL). One can recognise a Peptidase C18 domain in the interval 903-1026 (QASLLKVPYF…GMVSKGWRLL (124 aa)). Residues 903 to 1657 (QASLLKVPYF…CMSADLEVVT (755 aa)) are Cytoplasmic-facing. The protease NS2-3 stretch occupies residues 904–1206 (ASLLKVPYFV…PVESLETTMR (303 aa)). Residue cysteine 922 is the site of S-palmitoyl cysteine; by host attachment. The tract at residues 929 to 949 (VGGHYVQMAIIKLGALTGTYV) is interaction with host SCPS1. Residues histidine 952, glutamate 972, and cysteine 993 each act as for protease NS2 activity; shared with dimeric partner in the active site. One can recognise a Peptidase S29 domain in the interval 1027–1208 (APITAYAQQT…ESLETTMRSP (182 aa)). Catalysis depends on charge relay system; for serine protease NS3 activity residues histidine 1083 and aspartate 1107. Positions 1123 and 1125 each coordinate Zn(2+). The active-site Charge relay system; for serine protease NS3 activity is serine 1165. The Zn(2+) site is built by cysteine 1171 and histidine 1175. The Helicase ATP-binding domain occupies 1217–1369 (PAVPQSFQVA…ANIEEVALST (153 aa)). 1230–1237 (APTGSGKS) contacts ATP. Residues serine 1237 and glutamate 1317 each contribute to the Mg(2+) site. The DECH box motif lies at 1316-1319 (DECH). Positions 1486 to 1497 (QRRGRTGRGKPG) are RNA-binding. Residues 1658–1678 (STWVLVGGVLAALAAYCLSTG) form a helical membrane-spanning segment. Residues 1679–1690 (CVVIVGRIVLSG) form an NS3-binding region. Residues 1679–1805 (CVVIVGRIVL…AVTSPLTTSQ (127 aa)) are Cytoplasmic-facing. The chain crosses the membrane as a helical span at residues 1806 to 1824 (TLLFNILGGWVAAQLAAPG). Topologically, residues 1825–1828 (AATA) are lumenal. Residues 1829–1849 (FVGSGLAGAAVGSVGLGRVLV) traverse the membrane as a helical segment. Aspartate 1850 is a topological domain (cytoplasmic). A helical transmembrane segment spans residues 1851–1871 (ILAGYGAGVAGALVAFKIMSG). Residues 1872–1881 (ELPSTEDLVN) lie on the Lumenal side of the membrane. A helical transmembrane segment spans residues 1882–1902 (LLPAILSPGALVVGVVCAAIL). Over 1903 to 1972 (RRHVGPGEGA…WLSSESTTPC (70 aa)) the chain is Cytoplasmic. Cysteine 1972 carries S-palmitoyl cysteine; by host lipidation. Residues 1973-2002 (SGSWLRDIWDWICEVLSDFKTWLKTKLMPH) lie within the membrane without spanning it. Topologically, residues 2003 to 2990 (LPGIPFVSCQ…YHSVSHARPR (988 aa)) are cytoplasmic. 4 residues coordinate Zn(2+): cysteine 2011, cysteine 2029, cysteine 2031, and cysteine 2052. The FKBP8-binding stretch occupies residues 2120–2208 (EFFTELDGVR…ASSSASQLSA (89 aa)). The segment at 2120-2332 (EFFTELDGVR…PVPPPRKKRT (213 aa)) is transcriptional activation. Residues 2135-2139 (PPCKP) form an interaction with non-structural protein 4A region. Positions 2187 to 2207 (GRRLARGSPPSEASSSASQLS) are disordered. Residues 2189–2441 (RLARGSPPSE…TPCAAEEQKL (253 aa)) form an interaction with host SKP2 region. Phosphoserine; by host; in p56 is present on serine 2194. Phosphoserine; by host; in p58 occurs at positions 2197, 2201, 2204, 2207, and 2210. An ISDR region spans residues 2210–2249 (SLKATCTINHDSPDAELIEANLLWRQEMGGNITRVESENK). The tract at residues 2210-2275 (SLKATCTINH…REISVPAEIL (66 aa)) is interaction with EIF2AK2/PKR. An NS4B-binding region spans residues 2249-2306 (KVVILDSFDPLVAEEDEREISVPAEILRKSRRFTQALPIWARPDYNPPLIETWKKPNY). A disordered region spans residues 2312-2334 (HGCPLPPPQSPPVPPPRKKRTVV). Positions 2315–2326 (PLPPPQSPPVPP) are enriched in pro residues. Residues 2322 to 2325 (PPVP) carry the SH3-binding motif. A Nuclear localization signal motif is present at residues 2326-2334 (PPRKKRTVV). A Glycyl lysine isopeptide (Lys-Gly) (interchain with G-Cter in ubiquitin) cross-link involves residue lysine 2350. Low complexity predominate over residues 2351 to 2369 (SFGSSSTSGITGDNTTTSS). The tract at residues 2351–2408 (SFGSSSTSGITGDNTTTSSEPAPSGCSPDSDAESYSSMPPLEGEPGDPDLSDGSWSTV) is disordered. The tract at residues 2354–2377 (SSSTSGITGDNTTTSSEPAPSGCS) is V3. Serine 2449 and serine 2462 each carry phosphoserine; by host. The RdRp catalytic domain maps to 2634–2752 (PMGFSYDTRC…ICESAGVQED (119 aa)). Positions 2640, 2738, and 2739 each coordinate Mg(2+). A helical transmembrane segment spans residues 2991–3011 (WFWFCLLLLAAGVGIYLLPNR).

This sequence belongs to the hepacivirus polyprotein family. Homooligomer. Interacts with E1 (via C-terminus). Interacts with the non-structural protein 5A. Interacts (via N-terminus) with host STAT1 (via SH2 domain); this interaction results in decreased STAT1 phosphorylation and ubiquitin-mediated proteasome-dependent STAT1 degradation, leading to decreased IFN-stimulated gene transcription. Interacts with host STAT3; this interaction constitutively activates STAT3. Interacts with host LTBR receptor. Interacts with host TNFRSF1A receptor and possibly induces apoptosis. Interacts with host HNRPK. Interacts with host YWHAE. Interacts with host UBE3A/E6AP. Interacts with host DDX3X. Interacts with host APOA2. Interacts with host RXRA protein. Interacts with host SP110 isoform 3/Sp110b; this interaction sequesters the transcriptional corepressor SP110 away from the nucleus. Interacts with host CREB3 nuclear transcription protein; this interaction triggers cell transformation. Interacts with host ACY3. Interacts with host C1QR1. Interacts with host RBM24; this interaction, which enhances the interaction of the mature core protein with 5'-UTR, may inhibit viral translation and favor replication. Interacts with host EIF2AK2/PKR; this interaction induces the autophosphorylation of EIF2AK2. Part of the viral assembly initiation complex composed of NS2, E1, E2, NS3, NS4A, NS5A and the mature core protein. As to quaternary structure, forms a heterodimer with envelope glycoprotein E2. Interacts with mature core protein. Interacts with protease NS2. The heterodimer E1/E2 interacts with host CLDN1; this interaction plays a role in viral entry into host cell. Interacts with host SPSB2 (via C-terminus). Part of the viral assembly initiation complex composed of NS2, E1, E2, NS3, NS4A, NS5A and the mature core protein. Interacts with host NEURL3; this interaction prevents E1 binding to glycoprotein E2. In terms of assembly, forms a heterodimer with envelope glycoprotein E1. Interacts with host CD81 and SCARB1 receptors; these interactions play a role in viral entry into host cell. Interacts with host EIF2AK2/PKR; this interaction inhibits EIF2AK2 and probably allows the virus to evade the innate immune response. Interacts with host CD209/DC-SIGN and CLEC4M/DC-SIGNR. Interact with host SPCS1; this interaction is essential for viral particle assembly. Interacts with protease NS2. The heterodimer E1/E2 interacts with host CLDN1; this interaction plays a role in viral entry into host cell. Part of the viral assembly initiation complex composed of NS2, E1, E2, NS3, NS4A, NS5A and the mature core protein. Interacts with host SLC3A2/4F2hc; the interaction may facilitate viral entry into host cell. Interacts with human PLSCR1. Homohexamer. Homoheptamer. Interacts with protease NS2. As to quaternary structure, homodimer. Interacts with host SPCS1; this interaction is essential for viral particle assembly. Interacts with envelope glycoprotein E1. Interacts with envelope glycoprotein E2. Interacts with viroporin p7. Interacts with serine protease/helicase NS3. Part of the replication complex composed of NS2, NS3, NS4A, NS4B, NS5A and the RNA-directed RNA polymerase embedded in an ER-derived membranous web. Part of the viral assembly initiation complex composed of NS2, E1, E2, NS3, NS4A, NS5A and the mature core protein. In terms of assembly, interacts with protease NS2. Interacts with non-structural protein 4A; this interaction stabilizes the folding of NS3 serine protease. NS3-NS4A interaction is essential for NS3 activation and allows membrane anchorage of the latter. NS3/NS4A complex also prevents phosphorylation of host IRF3, thus preventing the establishment of dsRNA induced antiviral state. Interacts with host MAVS; this interaction leads to the cleavage and inhibition of host MAVS. Interacts with host TICAM1; this interaction leads to the cleavage and inhibition of host TICAM1. Interacts with host TANK-binding kinase/TBK1; this interaction results in the inhibition of the association between TBK1 and IRF3, which leads to the inhibition of IRF3 activation. Interacts with host RBM24. Part of the replication complex composed of NS2, NS3, NS4A, NS4B, NS5A and the RNA-directed RNA polymerase embedded in an ER-derived membranous web. Part of the viral assembly initiation complex composed of NS2, E1, E2, NS3, NS4A, NS5A and the mature core protein. Interacts with NS3 serine protease; this interaction stabilizes the folding of NS3 serine protease. NS3-NS4A interaction is essential for NS3 activation and allows membrane anchorage of the latter. Interacts with non-structural protein 5A (via N-terminus). Part of the replication complex composed of NS2, NS3, NS4A, NS4B, NS5A and the RNA-directed RNA polymerase embedded in an ER-derived membranous web. Part of the viral assembly initiation complex composed of NS2, E1, E2, NS3, NS4A, NS5A and the mature core protein. As to quaternary structure, homomultimer. Interacts with non-structural protein NS5A. Interacts with host PLA2G4C; this interaction likely initiates the recruitment of replication complexes to lipid droplets. Interacts with host STING; this interaction disrupts the interaction between STING and TBK1 thereby suppressing the interferon signaling. Part of the replication complex composed of NS2, NS3, NS4A, NS4B, NS5A and the RNA-directed RNA polymerase embedded in an ER-derived membranous web. In terms of assembly, monomer. Homodimer; dimerization is required for RNA-binding. Interacts with the mature core protein. Interacts (via N-terminus) with non-structural protein 4A. Interacts with non-structural protein 4B. Interacts (via region D2) with RNA-directed RNA polymerase. Part of the viral assembly initiation complex composed of NS2, E1, E2, NS3, NS4A, NS5A and the mature core protein. Part of the replication complex composed of NS2, NS3, NS4A, NS4B, NS5A and the RNA-directed RNA polymerase embedded in an ER-derived membranous web. Interacts with host GRB2. Interacts with host BIN1. Interacts with host PIK3R1. Interacts with host SRCAP. Interacts with host FKBP8. Interacts (via C-terminus) with host VAPB (via MSP domain). Interacts with host EIF2AK2/PKR; this interaction leads to disruption of EIF2AK2 dimerization by NS5A and probably allows the virus to evade the innate immune response. Interacts (via N-terminus) with host PACSIN2 (via N-terminus); this interaction attenuates protein kinase C alpha-mediated phosphorylation of PACSIN2 by disrupting the interaction between PACSIN2 and PRKCA. Interacts (via N-terminus) with host SRC kinase (via SH2 domain). Interacts with most Src-family kinases. Interacts with host IFI27 and SKP2; promotes the ubiquitin-mediated proteasomal degradation of NS5A. Interacts with host GPS2. Interacts with host TNFRSF21; this interaction allows the modulation by the virus of JNK, p38 MAPK, STAT3, and Akt signaling pathways in a DR6-dependent manner. Interacts (via N-terminus) with host CIDEB (via N-terminus); this interaction seems to regulate the association of HCV particles with APOE. Interacts with host CHKA/Choline Kinase-alpha; CHKA bridges host PI4KA and NS5A and potentiates NS5A-stimulated PI4KA activity, which then facilitates the targeting of the ternary complex to the ER for viral replication. Interacts with host SPSB2 (via C-terminus); this interaction targets NS5A for ubiquitination and degradation. Interacts with host RAB18; this interaction may promote the association of NS5A and other replicase components with lipid droplets. Interacts (via region D2) with host PPIA/CYPA; the interaction stimulates RNA-binding ability of NS5A and is dependent on the peptidyl-prolyl cis-trans isomerase activity of PPIA/CYPA. Interacts with host TRIM14; this interaction induces the degradation of NS5A. Homooligomer. Interacts with non-structural protein 5A. Interacts with host VAPB. Interacts with host PRK2/PKN2. Interacts with host HNRNPA1 and SEPT6; these interactions facilitate viral replication. Part of the replication complex composed of NS2, NS3, NS4A, NS4B, NS5A and the RNA-directed RNA polymerase. Requires Zn(2+) as cofactor. It depends on Mg(2+) as a cofactor. In terms of processing, specific enzymatic cleavages in vivo yield mature proteins. The structural proteins, core, E1, E2 and p7 are produced by proteolytic processing by host signal peptidases. The core protein precursor is synthesized as a 23 kDa, which is retained in the ER membrane through the hydrophobic signal peptide. Cleavage by the signal peptidase releases the 21 kDa mature core protein. The cleavage of the core protein precursor occurs between aminoacids 176 and 188 but the exact cleavage site is not known. Some degraded forms of the core protein appear as well during the course of infection. The other proteins (p7, NS2, NS3, NS4A, NS4B, NS5A and NS5B) are cleaved by the viral proteases. Autoprocessing between NS2 and NS3 is mediated by the NS2 cysteine protease catalytic domain and regulated by the NS3 N-terminal domain. Phosphorylated by host PKC and PKA. Post-translationally, ubiquitinated; mediated by UBE3A and leading to core protein subsequent proteasomal degradation. In terms of processing, highly N-glycosylated. Palmitoylation is required for NS2/3 autoprocessing and E2 recruitment to membranes. Post-translationally, palmitoylated. This modification may play a role in its polymerization or in protein-protein interactions. In terms of processing, phosphorylated on serines in a basal form termed p56. p58 is a hyperphosphorylated form of p56. p56 and p58 coexist in the cell in roughly equivalent amounts. Hyperphosphorylation is dependent on the presence of NS4A. Host CSNK1A1/CKI-alpha or RPS6KB1 kinases may be responsible for NS5A phosphorylation. Tyrosine phosphorylation is essential for the interaction with host SRC. Post-translationally, the N-terminus is phosphorylated by host PRK2/PKN2.

The protein resides in the host endoplasmic reticulum membrane. Its subcellular location is the host mitochondrion membrane. It localises to the virion. It is found in the host cytoplasm. The protein localises to the host nucleus. The protein resides in the host lipid droplet. Its subcellular location is the virion membrane. It localises to the host mitochondrion. It is found in the host cell membrane. The protein localises to the host perinuclear region. It catalyses the reaction Hydrolysis of four peptide bonds in the viral precursor polyprotein, commonly with Asp or Glu in the P6 position, Cys or Thr in P1 and Ser or Ala in P1'.. It carries out the reaction a ribonucleoside 5'-triphosphate + H2O = a ribonucleoside 5'-diphosphate + phosphate + H(+). The catalysed reaction is ATP + H2O = ADP + phosphate + H(+). The enzyme catalyses RNA(n) + a ribonucleoside 5'-triphosphate = RNA(n+1) + diphosphate. Inhibited by the antiviral drug hexamethylene amiloride. Inhibition by amantadine appears to be genotype-dependent. Also inhibited by long-alkyl-chain iminosugar derivatives. With respect to regulation, activity is up-regulated by PRK2/PKN2-mediated phosphorylation. In terms of biological role, packages viral RNA to form a viral nucleocapsid, and promotes virion budding. Participates in the viral particle production as a result of its interaction with the non-structural protein 5A. Binds RNA and may function as a RNA chaperone to induce the RNA structural rearrangements taking place during virus replication. Modulates viral translation initiation by interacting with viral IRES and 40S ribosomal subunit. Affects various cell signaling pathways, host immunity and lipid metabolism. Prevents the establishment of cellular antiviral state by blocking the interferon-alpha/beta (IFN-alpha/beta) and IFN-gamma signaling pathways and by blocking the formation of phosphorylated STAT1 and promoting ubiquitin-mediated proteasome-dependent degradation of STAT1. Activates STAT3 leading to cellular transformation. Regulates the activity of cellular genes, including c-myc and c-fos. May repress the promoter of p53, and sequester CREB3 and SP110 isoform 3/Sp110b in the cytoplasm. Represses cell cycle negative regulating factor CDKN1A, thereby interrupting an important check point of normal cell cycle regulation. Targets transcription factors involved in the regulation of inflammatory responses and in the immune response: suppresses TNF-induced NF-kappa-B activation, and activates AP-1. Binds to dendritic cells (DCs) via C1QR1, resulting in down-regulation of T-lymphocytes proliferation. Alters lipid metabolism by interacting with hepatocellular proteins involved in lipid accumulation and storage. Induces up-regulation of FAS promoter activity, and thereby contributes to the increased triglyceride accumulation in hepatocytes (steatosis). Its function is as follows. Forms a heterodimer with envelope glycoprotein E2, which mediates virus attachment to the host cell, virion internalization through clathrin-dependent endocytosis and fusion with host membrane. Fusion with the host cell is most likely mediated by both E1 and E2, through conformational rearrangements of the heterodimer required for fusion rather than a classical class II fusion mechanism. E1/E2 heterodimer binds host apolipoproteins such as APOB and ApoE thereby forming a lipo-viro-particle (LVP). APOE associated to the LVP allows the initial virus attachment to cell surface receptors such as the heparan sulfate proteoglycans (HSPGs), syndecan-1 (SDC1), syndecan-1 (SDC2), the low-density lipoprotein receptor (LDLR) and scavenger receptor class B type I (SCARB1). The cholesterol transfer activity of SCARB1 allows E2 exposure and binding of E2 to SCARB1 and the tetraspanin CD81. E1/E2 heterodimer binding on CD81 activates the epithelial growth factor receptor (EGFR) signaling pathway. Diffusion of the complex E1-E2-EGFR-SCARB1-CD81 to the cell lateral membrane allows further interaction with Claudin 1 (CLDN1) and occludin (OCLN) to finally trigger HCV entry. Functionally, forms a heterodimer with envelope glycoprotein E1, which mediates virus attachment to the host cell, virion internalization through clathrin-dependent endocytosis and fusion with host membrane. Fusion with the host cell is most likely mediated by both E1 and E2, through conformational rearrangements of the heterodimer required for fusion rather than a classical class II fusion mechanism. The interaction between envelope glycoprotein E2 and host apolipoprotein E/APOE allows the proper assembly, maturation and infectivity of the viral particles. This interaction is probably promoted via the up-regulation of cellular autophagy by the virus. E1/E2 heterodimer binds host apolipoproteins such as APOB and APOE thereby forming a lipo-viro-particle (LVP). APOE associated to the LVP allows the initial virus attachment to cell surface receptors such as the heparan sulfate proteoglycans (HSPGs), syndecan-1 (SDC1), syndecan-1 (SDC2), the low-density lipoprotein receptor (LDLR) and scavenger receptor class B type I (SCARB1). The cholesterol transfer activity of SCARB1 allows E2 exposure and binding of E2 to SCARB1 and the tetraspanin CD81. E1/E2 heterodimer binding on CD81 activates the epithelial growth factor receptor (EGFR) signaling pathway. Diffusion of the complex E1-E2-EGFR-SCARB1-CD81 to the cell lateral membrane allows further interaction with Claudin 1 (CLDN1) and occludin (OCLN) to finally trigger HCV entry. Inhibits host EIF2AK2/PKR activation, preventing the establishment of an antiviral state. Viral ligand for CD209/DC-SIGN and CLEC4M/DC-SIGNR, which are respectively found on dendritic cells (DCs), and on liver sinusoidal endothelial cells and macrophage-like cells of lymph node sinuses. These interactions allow the capture of circulating HCV particles by these cells and subsequent facilitated transmission to permissive cells such as hepatocytes and lymphocyte subpopulations. The interaction between E2 and host amino acid transporter complex formed by SLC3A2 and SLC7A5/LAT1 may facilitate viral entry into host cell. Ion channel protein that acts as a viroporin and plays an essential role in the assembly, envelopment and secretion of viral particles. Regulates the host cell secretory pathway, which induces the intracellular retention of viral glycoproteins and favors assembly of viral particles. Creates a pore in acidic organelles and releases Ca(2+) and H(+) in the cytoplasm of infected cells, leading to a productive viral infection. High levels of cytoplasmic Ca(2+) may trigger membrane trafficking and transport of viral ER-associated proteins to viroplasms, sites of viral genome replication. This ionic imbalance induces the assembly of the inflammasome complex, which triggers the maturation of pro-IL-1beta into IL-1beta through the action of caspase-1. Targets also host mitochondria and induces mitochondrial depolarization. In addition of its role as a viroporin, acts as a lipid raft adhesion factor. In terms of biological role, cysteine protease required for the proteolytic auto-cleavage between the non-structural proteins NS2 and NS3. The N-terminus of NS3 is required for the function of NS2 protease (active region NS2-3). Promotes the initiation of viral particle assembly by mediating the interaction between structural and non-structural proteins. Its function is as follows. Displays three enzymatic activities: serine protease with a chymotrypsin-like fold, NTPase and RNA helicase. NS3 serine protease, in association with NS4A, is responsible for the cleavages of NS3-NS4A, NS4A-NS4B, NS4B-NS5A and NS5A-NS5B. The NS3/NS4A complex prevents phosphorylation of host IRF3, thus preventing the establishment of dsRNA induced antiviral state. The NS3/NS4A complex induces host amino acid transporter component SLC3A2, thus contributing to HCV propagation. NS3 RNA helicase binds to RNA and unwinds both dsDNA and dsRNA in the 3' to 5' direction, and likely resolves RNA complicated stable secondary structures in the template strand. Binds a single ATP and catalyzes the unzipping of a single base pair of dsRNA. Inhibits host antiviral proteins TBK1 and IRF3 thereby preventing the establishment of an antiviral state. Cleaves host MAVS/CARDIF thereby preventing the establishment of an antiviral state. Cleaves host TICAM1/TRIF, thereby disrupting TLR3 signaling and preventing the establishment of an antiviral state. Functionally, induces a specific membrane alteration that serves as a scaffold for the virus replication complex. This membrane alteration gives rise to the so-called ER-derived membranous web that contains the replication complex. NS4B self-interaction contributes to its function in membranous web formation. Promotes host TRIF protein degradation in a CASP8-dependent manner thereby inhibiting host TLR3-mediated interferon signaling. Disrupts the interaction between STING and TBK1 contributing to the inhibition of interferon signaling. Phosphorylated protein that is indispensable for viral replication and assembly. Both hypo- and hyperphosphorylated states are required for the viral life cycle. The hyperphosphorylated form of NS5A is an inhibitor of viral replication. Involved in RNA-binding and especially in binding to the viral genome. Zinc is essential for RNA-binding. Participates in the viral particle production as a result of its interaction with the mature viral core protein. Its interaction with host VAPB may target the viral replication complex to vesicles. Down-regulates viral IRES translation initiation. Mediates interferon resistance, presumably by interacting with and inhibiting host EIF2AK2/PKR. Prevents BIN1-induced apoptosis. Acts as a transcriptional activator of some host genes important for viral replication when localized in the nucleus. Via the interaction with host PACSIN2, modulates lipid droplet formation in order to promote virion assembly. Modulates TNFRSF21/DR6 signaling pathway for viral propagation. In terms of biological role, RNA-dependent RNA polymerase that performs primer-template recognition and RNA synthesis during viral replication. Initiates RNA transcription/replication at a flavin adenine dinucleotide (FAD), resulting in a 5'- FAD cap on viral RNAs. In this way, recognition of viral 5' RNA by host pattern recognition receptors can be bypassed, thereby evading activation of antiviral pathways. The polypeptide is Genome polyprotein (Hepatitis C virus genotype 1b (isolate HC-J1) (HCV)).